We begin with the raw amino-acid sequence, 137 residues long: Large ribosomal subunit protein uL16 (137 aa).

The span at 1 to 17 (MLQPKRTKFRKTHKGRN) shows a compositional bias: basic residues. Residues 1–24 (MLQPKRTKFRKTHKGRNRGLANTG) form a disordered region.

It belongs to the universal ribosomal protein uL16 family. As to quaternary structure, part of the 50S ribosomal subunit.

Functionally, binds 23S rRNA and is also seen to make contacts with the A and possibly P site tRNAs. This Aeromonas salmonicida (strain A449) protein is Large ribosomal subunit protein uL16.